The primary structure comprises 463 residues: Fibrinogen beta chain (463 aa).

Acidic residues predominate over residues 1–12 (ASVEYDNEEDSP). The disordered stretch occupies residues 1 to 56 (ASVEYDNEEDSPQIDARAHRPLDKRQEAAPTLRPVAPPISGTGYQPRPPKQDKQAM). The residue at position 5 (tyrosine 5) is a Sulfotyrosine. Residues 16–27 (ARAHRPLDKRQE) show a composition bias toward basic and acidic residues. 2 disulfide bridges follow: cysteine 205/cysteine 289 and cysteine 215/cysteine 244. The Fibrinogen C-terminal domain occupies 206 to 461 (NIPVVSGREC…KMSMKIKPYF (256 aa)). Residue asparagine 367 is glycosylated (N-linked (GlcNAc...) asparagine). Ca(2+)-binding residues include aspartate 384, aspartate 386, and tryptophan 388. An intrachain disulfide couples cysteine 397 to cysteine 410.

Heterohexamer; disulfide linked. Contains 2 sets of 3 non-identical chains (alpha, beta and gamma). The 2 heterotrimers are in head to head conformation with the N-termini in a small central domain. In terms of processing, conversion of fibrinogen to fibrin is triggered by thrombin, which cleaves fibrinopeptides A and B from alpha and beta chains, and thus exposes the N-terminal polymerization sites responsible for the formation of the soft clot. The soft clot is converted into the hard clot by factor XIIIA which catalyzes the epsilon-(gamma-glutamyl)lysine cross-linking between gamma chains (stronger) and between alpha chains (weaker) of different monomers.

The protein localises to the secreted. Functionally, cleaved by the protease thrombin to yield monomers which, together with fibrinogen alpha (FGA) and fibrinogen gamma (FGG), polymerize to form an insoluble fibrin matrix. Fibrin has a major function in hemostasis as one of the primary components of blood clots. In Gallus gallus (Chicken), this protein is Fibrinogen beta chain (FGB).